Consider the following 100-residue polypeptide: Ribosomal biogenesis factor (100 aa).

Position 19 is a phosphoserine (Ser19). An N6-acetyllysine modification is found at Lys21. At Ser69 the chain carries Phosphoserine.

In terms of assembly, associates with the pre-60S ribosomal particles.

The protein localises to the nucleus. It localises to the nucleolus. Its function is as follows. Trans-acting factor in ribosome biogenesis required for efficient 40S and 60S subunit production. The protein is Ribosomal biogenesis factor (RBIS) of Bos taurus (Bovine).